The sequence spans 315 residues: Acetyl-coenzyme A carboxylase carboxyl transferase subunit alpha (315 aa).

Positions 40 to 293 constitute a CoA carboxyltransferase C-terminal domain; it reads LQDKSKTLTE…REELSSQLAM (254 aa).

Belongs to the AccA family. As to quaternary structure, acetyl-CoA carboxylase is a heterohexamer composed of biotin carboxyl carrier protein (AccB), biotin carboxylase (AccC) and two subunits each of ACCase subunit alpha (AccA) and ACCase subunit beta (AccD).

The protein resides in the cytoplasm. It catalyses the reaction N(6)-carboxybiotinyl-L-lysyl-[protein] + acetyl-CoA = N(6)-biotinyl-L-lysyl-[protein] + malonyl-CoA. It participates in lipid metabolism; malonyl-CoA biosynthesis; malonyl-CoA from acetyl-CoA: step 1/1. Component of the acetyl coenzyme A carboxylase (ACC) complex. First, biotin carboxylase catalyzes the carboxylation of biotin on its carrier protein (BCCP) and then the CO(2) group is transferred by the carboxyltransferase to acetyl-CoA to form malonyl-CoA. The polypeptide is Acetyl-coenzyme A carboxylase carboxyl transferase subunit alpha (Pseudomonas syringae pv. syringae (strain B728a)).